The primary structure comprises 473 residues: Zinc finger and SCAN domain-containing protein 21 (473 aa).

A Glycyl lysine isopeptide (Lys-Gly) (interchain with G-Cter in SUMO2) cross-link involves residue Lys-27. The SCAN box domain maps to 45–127 (RQRFRQFGYH…TLLEDLEREL (83 aa)). The tract at residues 127 to 171 (LDEPGHQVSTPPNEQKPVWEKISSSGTAKESPSSMQPQPLETSHN) is disordered. Residues 148–171 (ISSSGTAKESPSSMQPQPLETSHN) show a composition bias toward polar residues. Residues Lys-221 and Lys-232 each participate in a glycyl lysine isopeptide (Lys-Gly) (interchain with G-Cter in SUMO2) cross-link. The segment at 244–272 (LENEKGTKPPLQEAGSKKGRESVPTKPTP) is disordered. The segment covering 258–272 (GSKKGRESVPTKPTP) has biased composition (basic and acidic residues). C2H2-type zinc fingers lie at residues 277–299 (YICA…RRTH), 305–327 (YVCT…YRTH), 333–354 (YDCK…QRMH), 360–382 (YQCK…YRIH), 388–410 (YQCN…QRLH), 416–438 (YKCK…HRIH), and 444–466 (YWCH…QRVH). Residue Lys-349 forms a Glycyl lysine isopeptide (Lys-Gly) (interchain with G-Cter in SUMO2) linkage.

This sequence belongs to the krueppel C2H2-type zinc-finger protein family.

The protein localises to the nucleus. Functionally, strong transcriptional activator. Plays an important role in spermatogenesis; essential for the progression of meiotic prophase I in spermatocytes. This chain is Zinc finger and SCAN domain-containing protein 21 (ZSCAN21), found in Gorilla gorilla gorilla (Western lowland gorilla).